Reading from the N-terminus, the 232-residue chain is Probable phospholipid hydroperoxide glutathione peroxidase 6, mitochondrial (232 aa).

The N-terminal 54 residues, 1–54 (MLRSSIRLLYIRRTSPLLRSLSSSSSSSSSKRFDSAKPLFNSHRIISLPISTTG), are a transit peptide targeting the mitochondrion. Cysteine 105 is a catalytic residue.

The protein belongs to the glutathione peroxidase family. Expressed at a low but detectable level in leaves, stems, and flowers, but at a higher level in siliques and even higher in roots. Predominantly expressed in seeds.

The protein localises to the mitochondrion. The enzyme catalyses a hydroperoxy polyunsaturated fatty acid + 2 glutathione = a hydroxy polyunsaturated fatty acid + glutathione disulfide + H2O. In terms of biological role, protects cells and enzymes from oxidative damage, by catalyzing the reduction of hydrogen peroxide, lipid peroxides and organic hydroperoxide, by glutathione. The sequence is that of Probable phospholipid hydroperoxide glutathione peroxidase 6, mitochondrial (GPX6) from Arabidopsis thaliana (Mouse-ear cress).